The primary structure comprises 285 residues: RNA 5'-monophosphate methyltransferase (285 aa).

S-adenosyl-L-methionine-binding positions include R46, N77, D111, D136–I137, and M165. A Bin3-type SAM domain is found at E53–P275.

It belongs to the methyltransferase superfamily. Interacts with DICER1; the interaction may be mediated by RNA.

The protein localises to the cytoplasm. It catalyses the reaction a 5'-end 5'-phospho-ribonucleoside-RNA + S-adenosyl-L-methionine = a 5'-end (5'-methylphospho)-ribonucleoside-RNA + S-adenosyl-L-homocysteine. The enzyme catalyses a 5'-end 5'-phospho-ribonucleoside-RNA + 2 S-adenosyl-L-methionine = a 5'-end (5'-bismethylphospho)-ribonucleoside-RNA + 2 S-adenosyl-L-homocysteine. O-methyltransferase that specifically monomethylates 5'-monophosphate of cytoplasmic histidyl tRNA (tRNA(His)), acting as a capping enzyme by protecting tRNA(His) from cleavage by DICER1. Also able, with less efficiently, to methylate the 5' monophosphate of a subset of pre-miRNAs, acting as a negative regulator of miRNA processing. The 5' monophosphate of pre-miRNAs is recognized by DICER1 and is required for pre-miRNAs processing: methylation at this position reduces the processing of pre-miRNAs by DICER1. Was also reported to mediate dimethylation of pre-miR-145; however dimethylation cannot be reproduced by another group which observes a monomethylation of pre-miR-145. This is RNA 5'-monophosphate methyltransferase from Mus musculus (Mouse).